A 226-amino-acid chain; its full sequence is Enolase-phosphatase E1 (226 aa).

Belongs to the HAD-like hydrolase superfamily. MasA/MtnC family. As to quaternary structure, monomer. Mg(2+) serves as cofactor.

It carries out the reaction 5-methylsulfanyl-2,3-dioxopentyl phosphate + H2O = 1,2-dihydroxy-5-(methylsulfanyl)pent-1-en-3-one + phosphate. It functions in the pathway amino-acid biosynthesis; L-methionine biosynthesis via salvage pathway; L-methionine from S-methyl-5-thio-alpha-D-ribose 1-phosphate: step 3/6. The protein operates within amino-acid biosynthesis; L-methionine biosynthesis via salvage pathway; L-methionine from S-methyl-5-thio-alpha-D-ribose 1-phosphate: step 4/6. Functionally, bifunctional enzyme that catalyzes the enolization of 2,3-diketo-5-methylthiopentyl-1-phosphate (DK-MTP-1-P) into the intermediate 2-hydroxy-3-keto-5-methylthiopentenyl-1-phosphate (HK-MTPenyl-1-P), which is then dephosphorylated to form the acireductone 1,2-dihydroxy-3-keto-5-methylthiopentene (DHK-MTPene). The polypeptide is Enolase-phosphatase E1 (Shewanella sp. (strain MR-4)).